The following is a 424-amino-acid chain: Hemagglutinin-esterase (424 aa).

An N-terminal signal peptide occupies residues 1–16 (MFLLPRFVLVSCIIGS). Residues 7 to 127 (FVLVSCIIGS…SNDIWMQNKG (121 aa)) are esterase domain 1. Residues 17 to 392 (LGFDNPPTNV…PICVYDPLPI (376 aa)) lie on the Virion surface side of the membrane. The active-site Nucleophile is Ser-40. Residues Cys-44 and Cys-65 are joined by a disulfide bond. Asn-54, Asn-89, Asn-153, Asn-236, and Asn-301 each carry an N-linked (GlcNAc...) asparagine; by host glycan. Cystine bridges form between Cys-113–Cys-162, Cys-197–Cys-276, and Cys-205–Cys-249. The interval 128-266 (LFYTQLYKNM…GNYLAISNEL (139 aa)) is receptor binding. The tract at residues 267–379 (LLTVPTKAIC…RCPTAADINT (113 aa)) is esterase domain 2. A disulfide bridge links Cys-307 with Cys-312. The N-linked (GlcNAc...) asparagine; by host glycan is linked to Asn-316. Residues Asp-326 and His-329 each act as charge relay system in the active site. A disulfide bond links Cys-347 and Cys-371. An N-linked (GlcNAc...) asparagine; by host glycan is attached at Asn-358. The chain crosses the membrane as a helical span at residues 393–413 (ILLGILLGVAVIIIVVLLLYF). Residues 414–424 (MVDNGTRLHDA) lie on the Intravirion side of the membrane. Asn-417 is a glycosylation site (N-linked (GlcNAc...) asparagine; by host).

Belongs to the influenza type C/coronaviruses hemagglutinin-esterase family. In terms of assembly, homodimer; disulfide-linked. Forms a complex with the M protein in the pre-Golgi. Associates then with S-M complex to form a ternary complex S-M-HE. Post-translationally, N-glycosylated in the host RER.

It is found in the virion membrane. The protein localises to the host cell membrane. It catalyses the reaction N-acetyl-9-O-acetylneuraminate + H2O = N-acetylneuraminate + acetate + H(+). It carries out the reaction N-acetyl-4-O-acetylneuraminate + H2O = N-acetylneuraminate + acetate + H(+). Functionally, structural protein that makes short spikes at the surface of the virus. Contains receptor binding and receptor-destroying activities. Mediates de-O-acetylation of N-acetyl-4-O-acetylneuraminic acid, which is probably the receptor determinant recognized by the virus on the surface of erythrocytes and susceptible cells. This receptor-destroying activity is important for virus release as it probably helps preventing self-aggregation and ensures the efficient spread of the progeny virus from cell to cell. May serve as a secondary viral attachment protein for initiating infection, the spike protein being the major one. May become a target for both the humoral and the cellular branches of the immune system. The sequence is that of Hemagglutinin-esterase from Bovine coronavirus (strain LSU-94LSS-051) (BCoV-LSU).